The chain runs to 293 residues: Formamidopyrimidine-DNA glycosylase (293 aa).

The active-site Schiff-base intermediate with DNA is the Pro-2. Glu-3 serves as the catalytic Proton donor. The Proton donor; for beta-elimination activity role is filled by Lys-60. DNA contacts are provided by His-110, Arg-129, and Arg-174. The segment at Asn-259–Lys-293 adopts an FPG-type zinc-finger fold. Arg-283 acts as the Proton donor; for delta-elimination activity in catalysis.

Belongs to the FPG family. Monomer. It depends on Zn(2+) as a cofactor.

It catalyses the reaction Hydrolysis of DNA containing ring-opened 7-methylguanine residues, releasing 2,6-diamino-4-hydroxy-5-(N-methyl)formamidopyrimidine.. The catalysed reaction is 2'-deoxyribonucleotide-(2'-deoxyribose 5'-phosphate)-2'-deoxyribonucleotide-DNA = a 3'-end 2'-deoxyribonucleotide-(2,3-dehydro-2,3-deoxyribose 5'-phosphate)-DNA + a 5'-end 5'-phospho-2'-deoxyribonucleoside-DNA + H(+). In terms of biological role, involved in base excision repair of DNA damaged by oxidation or by mutagenic agents. Acts as a DNA glycosylase that recognizes and removes damaged bases. Has a preference for oxidized purines, such as 7,8-dihydro-8-oxoguanine (8-oxoG). Has AP (apurinic/apyrimidinic) lyase activity and introduces nicks in the DNA strand. Cleaves the DNA backbone by beta-delta elimination to generate a single-strand break at the site of the removed base with both 3'- and 5'-phosphates. This chain is Formamidopyrimidine-DNA glycosylase, found in Prochlorococcus marinus (strain MIT 9312).